Consider the following 447-residue polypeptide: Beclin-1 (447 aa).

Residues 105–124 carry the BH3 motif; it reads TMENLSRRLKVTSNLFDIMS. The interaction with BCL2 and BCL2L1 isoform Bcl-X(L) stretch occupies residues 109 to 156; sequence LSRRLKVTSNLFDIMSGQTDIDHPLCEECTDTLLDHLDTQLNITENEC. The stretch at 140 to 214 forms a coiled coil; the sequence is TLLDHLDTQL…VAKELDEGRN (75 aa). Residues 242 to 447 are evolutionary conserved domain (ECD); it reads DDLKSVDNQM…AWVSSQFYNR (206 aa). Residue K399 forms a Glycyl lysine isopeptide (Lys-Gly) (interchain with G-Cter in ubiquitin) linkage. The segment at 422–447 is required for membrane-association; that stretch reads WTKALKFMLTNLKWGLAWVSSQFYNR.

This sequence belongs to the beclin family. Component of the PI3K (PI3KC3/PI3K-III/class III phosphatidylinositol 3-kinase) complex. Interacts with the poly-Gln domain of ATXN3; the interaction causes deubiquitination at Lys-399 and stabilizes BECN1. Post-translationally, polyubiquitinated at Lys-399 with 'Lys-48'-linkages. 'Lys-48'-linked polyubiquitination of Lys-399 leads to degradation. Deubiquitinated by ATXN3, leading to stabilization.

Its subcellular location is the cytoplasm. It is found in the golgi apparatus. The protein resides in the trans-Golgi network membrane. It localises to the endosome membrane. The protein localises to the endoplasmic reticulum membrane. Its subcellular location is the mitochondrion membrane. It is found in the endosome. The protein resides in the cytoplasmic vesicle. It localises to the autophagosome. In terms of biological role, plays a central role in autophagy. Acts as a core subunit of different PI3K complex forms that mediate formation of phosphatidylinositol 3-phosphate and are believed to play a role in multiple membrane trafficking pathways: PI3KC3-C1 is involved in initiation of autophagosomes and PI3KC3-C2 in maturation of autophagosomes and endocytosis. Involved in regulation of degradative endocytic trafficking and required for the abscission step in cytokinesis, probably in the context of PI3KC3-C2. Essential for the formation of PI3KC3-C2 but not PI3KC3-C1 PI3K complex forms. Involved in endocytosis including endosome formation in neuronal cells. This is Beclin-1 (becn1) from Danio rerio (Zebrafish).